A 255-amino-acid polypeptide reads, in one-letter code: Thiazole synthase (255 aa).

Lysine 96 acts as the Schiff-base intermediate with DXP in catalysis. Residues glycine 157, 183 to 184, and 205 to 206 contribute to the 1-deoxy-D-xylulose 5-phosphate site; these read AG and NT.

It belongs to the ThiG family. As to quaternary structure, homotetramer. Forms heterodimers with either ThiH or ThiS.

The protein localises to the cytoplasm. The enzyme catalyses [ThiS sulfur-carrier protein]-C-terminal-Gly-aminoethanethioate + 2-iminoacetate + 1-deoxy-D-xylulose 5-phosphate = [ThiS sulfur-carrier protein]-C-terminal Gly-Gly + 2-[(2R,5Z)-2-carboxy-4-methylthiazol-5(2H)-ylidene]ethyl phosphate + 2 H2O + H(+). It participates in cofactor biosynthesis; thiamine diphosphate biosynthesis. Functionally, catalyzes the rearrangement of 1-deoxy-D-xylulose 5-phosphate (DXP) to produce the thiazole phosphate moiety of thiamine. Sulfur is provided by the thiocarboxylate moiety of the carrier protein ThiS. In vitro, sulfur can be provided by H(2)S. The sequence is that of Thiazole synthase from Anoxybacillus flavithermus (strain DSM 21510 / WK1).